The following is a 235-amino-acid chain: Phosphoribosylaminoimidazole-succinocarboxamide synthase (235 aa).

The protein belongs to the SAICAR synthetase family.

The catalysed reaction is 5-amino-1-(5-phospho-D-ribosyl)imidazole-4-carboxylate + L-aspartate + ATP = (2S)-2-[5-amino-1-(5-phospho-beta-D-ribosyl)imidazole-4-carboxamido]succinate + ADP + phosphate + 2 H(+). It participates in purine metabolism; IMP biosynthesis via de novo pathway; 5-amino-1-(5-phospho-D-ribosyl)imidazole-4-carboxamide from 5-amino-1-(5-phospho-D-ribosyl)imidazole-4-carboxylate: step 1/2. This Sulfolobus acidocaldarius (strain ATCC 33909 / DSM 639 / JCM 8929 / NBRC 15157 / NCIMB 11770) protein is Phosphoribosylaminoimidazole-succinocarboxamide synthase.